Reading from the N-terminus, the 128-residue chain is Small ribosomal subunit protein uS11 (128 aa).

This sequence belongs to the universal ribosomal protein uS11 family. As to quaternary structure, part of the 30S ribosomal subunit. Interacts with proteins S7 and S18. Binds to IF-3.

In terms of biological role, located on the platform of the 30S subunit, it bridges several disparate RNA helices of the 16S rRNA. Forms part of the Shine-Dalgarno cleft in the 70S ribosome. This Acinetobacter baylyi (strain ATCC 33305 / BD413 / ADP1) protein is Small ribosomal subunit protein uS11.